Consider the following 119-residue polypeptide: Hydrogenase maturation factor HypA (119 aa).

Residue His2 participates in Ni(2+) binding. Cys73, Cys76, Cys89, and Cys92 together coordinate Zn(2+).

Belongs to the HypA/HybF family.

Functionally, involved in the maturation of [NiFe] hydrogenases. Required for nickel insertion into the metal center of the hydrogenase. This is Hydrogenase maturation factor HypA from Cupriavidus necator (strain ATCC 17699 / DSM 428 / KCTC 22496 / NCIMB 10442 / H16 / Stanier 337) (Ralstonia eutropha).